We begin with the raw amino-acid sequence, 329 residues long: Phosphate acyltransferase (329 aa).

It belongs to the PlsX family. As to quaternary structure, homodimer. Probably interacts with PlsY.

The protein localises to the cytoplasm. The enzyme catalyses a fatty acyl-[ACP] + phosphate = an acyl phosphate + holo-[ACP]. Its pathway is lipid metabolism; phospholipid metabolism. Functionally, catalyzes the reversible formation of acyl-phosphate (acyl-PO(4)) from acyl-[acyl-carrier-protein] (acyl-ACP). This enzyme utilizes acyl-ACP as fatty acyl donor, but not acyl-CoA. The protein is Phosphate acyltransferase of Geobacillus sp. (strain WCH70).